The sequence spans 251 residues: 2-amino-5-chloromuconate deaminase (251 aa).

In terms of assembly, monomer.

It catalyses the reaction (2Z,4E)-2-aminomuconate + H2O = (2Z,4E)-2-hydroxyhexa-2,4-dienedioate + NH4(+). It functions in the pathway xenobiotic degradation; 4-chloronitrobenzene degradation. The protein operates within xenobiotic degradation; nitrobenzene degradation. With respect to regulation, cysteine residue modifying agents such as p-chloromercuribenzoate and the SH-binding metals Zn(2+), Ni(2+) and Cu(2+) completely inhibit deaminase activity, whereas Ca(2+), Mg(2+) and the histidine residue-modifying agent diethyl pyrocarbonate inhibit the activity by 23 to 50%. Involved in the biodegradation of xenobiotic compounds, such as nitrobenzene and 4-chloronitrobenzene (4-CNB). CnbZ preferentially catalyzes the deamination of 2-amino-5-chloromuconate (2A5CM) to yield 2-hydroxy-5-chloromuconate (2H5CM). Also able to catalyze the deamination of 2-aminomuconate to yield 2-hydroxymuconate, which spontaneously converts into its keto form, 2-oxalocrotonate. This is 2-amino-5-chloromuconate deaminase from Comamonas testosteroni (Pseudomonas testosteroni).